A 4646-amino-acid polypeptide reads, in one-letter code: Cytoplasmic dynein 1 heavy chain 1 (4646 aa).

An N-acetylserine modification is found at Ser-2. Residues 53–1867 form a stem region; the sequence is EAALEEKSAL…SIQMANAKFN (1815 aa). Ser-70 carries the phosphoserine modification. Coiled-coil stretches lie at residues 181-202, 455-478, and 543-566; these read SVEK…NIEI, AHRK…QLRA, and TEAW…RITA. The interval 448–703 is interaction with DYNC1I2; that stretch reads MVWRINPAHR…NTQEIFDDWA (256 aa). The segment at 651–802 is interaction with DYNC1LI2; the sequence is AKQIDRQLTA…EKVEERNTIS (152 aa). At Lys-1125 the chain carries N6-acetyllysine. 2 coiled-coil regions span residues 1171–1252 and 1357–1373; these read TYVQ…AVES and RKLR…LKSF. Ser-1230 is modified (phosphoserine). 4 AAA regions span residues 1868 to 2099, 2180 to 2452, 2556 to 2805, and 2899 to 3168; these read YGFE…VLVS, EELK…LTRL, EVET…WVRG, and VFYE…GGRT. Residues 1906–1913 and 2224–2231 contribute to the ATP site; these read GPAGTGKT and GPSGSGKS. The disordered stretch occupies residues 2390 to 2411; sequence GEDEAQRRRKGKEDEGEEAASP. ATP contacts are provided by residues 2595 to 2602 and 2937 to 2944; these read GPPGSGKT and GVSGAGKT. Coiled-coil stretches lie at residues 3189–3275, 3396–3500, and 3737–3800; these read EKRS…ADKQ, AIAQ…KNQM, and EFQL…VSQQ. Residues 3189–3500 are stalk; the sequence is EKRSELEEQQ…KTSETFKNQM (312 aa). Position 3480 is an N6-acetyllysine (Lys-3480). AAA stretches follow at residues 3553–3782 and 4005–4221; these read LSNA…EVTR and AHMF…TVDT. Phosphoserine is present on Ser-4162. Lys-4283 bears the N6-acetyllysine mark. Residue Thr-4366 is modified to Phosphothreonine. At Ser-4368 the chain carries Phosphoserine.

This sequence belongs to the dynein heavy chain family. As to quaternary structure, homodimer. The cytoplasmic dynein 1 complex consists of two catalytic heavy chains (HCs) and a number of non-catalytic subunits presented by intermediate chains (ICs), light intermediate chains (LICs) and light chains (LCs); the composition seems to vary in respect to the IC, LIC and LC composition. The heavy chain homodimer serves as a scaffold for the probable homodimeric assembly of the respective non-catalytic subunits. The ICs and LICs bind directly to the HC dimer and dynein LCs assemble on the IC dimer. Interacts with DYNC1LI1; DYNC1LI1 and DYNC1LI2 bind mutually exclusive to DYNC1H1. Interacts with DYNC1LI2; DYNC1LI1 and DYNC1LI2 bind mutually exclusive to DYNC1H1. Interacts with DYNC1I2. Interacts with BICD2. Interacts with isoform 2 of CRACR2A. Interacts with DNALI1.

The protein resides in the cytoplasm. It localises to the cytoskeleton. Functionally, cytoplasmic dynein 1 acts as a motor for the intracellular retrograde motility of vesicles and organelles along microtubules. Dynein has ATPase activity; the force-producing power stroke is thought to occur on release of ADP. Plays a role in mitotic spindle assembly and metaphase plate congression. The polypeptide is Cytoplasmic dynein 1 heavy chain 1 (Homo sapiens (Human)).